Reading from the N-terminus, the 550-residue chain is Arginine--tRNA ligase (550 aa).

The 'HIGH' region signature appears at Ala-130–Gly-140.

The protein belongs to the class-I aminoacyl-tRNA synthetase family. As to quaternary structure, monomer.

The protein localises to the cytoplasm. It catalyses the reaction tRNA(Arg) + L-arginine + ATP = L-arginyl-tRNA(Arg) + AMP + diphosphate. In Mycobacterium ulcerans (strain Agy99), this protein is Arginine--tRNA ligase.